Reading from the N-terminus, the 204-residue chain is VQ motif-containing protein 13 (204 aa).

A compositionally biased stretch (basic and acidic residues) spans 1 to 12; the sequence is MEKSPRYRDKAK. Residues 1–26 form a disordered region; the sequence is MEKSPRYRDKAKNLLPSPSSCTTTPT. A compositionally biased stretch (low complexity) spans 16–26; sequence PSPSSCTTTPT. Phosphoserine is present on serine 17. The VQ signature appears at 46 to 55; sequence FKQVVQLLTG. The disordered stretch occupies residues 56–90; the sequence is IPKNPTHQPDPRFPPFHSIPPIKAVTNKKQSSSFR. A phosphoserine mark is found at serine 73 and serine 128. Threonine 131 is modified (phosphothreonine). The segment at 133-204 is disordered; sequence LMSDPFYRPG…HSPAPSPHDH (72 aa). The span at 143–152 shows a compositional bias: low complexity; sequence SFSQSPSDSK. Residues serine 147 and serine 173 each carry the phosphoserine modification. Phosphothreonine is present on residues threonine 177 and threonine 192. Residues serine 196 and serine 200 each carry the phosphoserine modification.

Phosphorylated on serine and threonine residues by MPK6.

The protein resides in the nucleus. In terms of biological role, may modulate WRKY transcription factor activities. The protein is VQ motif-containing protein 13 of Arabidopsis thaliana (Mouse-ear cress).